Reading from the N-terminus, the 451-residue chain is Phosphoglucosamine mutase (451 aa).

Ser103 (phosphoserine intermediate) is an active-site residue. Residues Ser103, Asp243, Asp245, and Asp247 each contribute to the Mg(2+) site. The residue at position 103 (Ser103) is a Phosphoserine.

This sequence belongs to the phosphohexose mutase family. Requires Mg(2+) as cofactor. Activated by phosphorylation.

The catalysed reaction is alpha-D-glucosamine 1-phosphate = D-glucosamine 6-phosphate. Catalyzes the conversion of glucosamine-6-phosphate to glucosamine-1-phosphate. In Lactobacillus gasseri (strain ATCC 33323 / DSM 20243 / BCRC 14619 / CIP 102991 / JCM 1131 / KCTC 3163 / NCIMB 11718 / NCTC 13722 / AM63), this protein is Phosphoglucosamine mutase.